A 224-amino-acid polypeptide reads, in one-letter code: Ribose-5-phosphate isomerase A (224 aa).

Residues 26-29, 81-84, and 94-97 each bind substrate; these read TGST, DGAD, and KGGG. Catalysis depends on Glu103, which acts as the Proton acceptor. Lys121 is a binding site for substrate.

Belongs to the ribose 5-phosphate isomerase family. In terms of assembly, homodimer.

It catalyses the reaction aldehydo-D-ribose 5-phosphate = D-ribulose 5-phosphate. The protein operates within carbohydrate degradation; pentose phosphate pathway; D-ribose 5-phosphate from D-ribulose 5-phosphate (non-oxidative stage): step 1/1. Functionally, catalyzes the reversible conversion of ribose-5-phosphate to ribulose 5-phosphate. This chain is Ribose-5-phosphate isomerase A, found in Listeria innocua serovar 6a (strain ATCC BAA-680 / CLIP 11262).